The sequence spans 312 residues: Ribonuclease Z (312 aa).

The Zn(2+) site is built by His-63, His-65, Asp-67, His-68, His-140, Asp-211, and His-269. The Proton acceptor role is filled by Asp-67.

The protein belongs to the RNase Z family. As to quaternary structure, homodimer. It depends on Zn(2+) as a cofactor.

The catalysed reaction is Endonucleolytic cleavage of RNA, removing extra 3' nucleotides from tRNA precursor, generating 3' termini of tRNAs. A 3'-hydroxy group is left at the tRNA terminus and a 5'-phosphoryl group is left at the trailer molecule.. Functionally, zinc phosphodiesterase, which displays some tRNA 3'-processing endonuclease activity. Probably involved in tRNA maturation, by removing a 3'-trailer from precursor tRNA. This is Ribonuclease Z from Anoxybacillus flavithermus (strain DSM 21510 / WK1).